Consider the following 315-residue polypeptide: Aspartate carbamoyltransferase catalytic subunit (315 aa).

The carbamoyl phosphate site is built by R65 and T66. K93 contacts L-aspartate. Residues R115, H143, and Q146 each coordinate carbamoyl phosphate. L-aspartate-binding residues include R176 and R231. Residues G272 and P273 each coordinate carbamoyl phosphate.

This sequence belongs to the aspartate/ornithine carbamoyltransferase superfamily. ATCase family. Heterododecamer (2C3:3R2) of six catalytic PyrB chains organized as two trimers (C3), and six regulatory PyrI chains organized as three dimers (R2).

It catalyses the reaction carbamoyl phosphate + L-aspartate = N-carbamoyl-L-aspartate + phosphate + H(+). The protein operates within pyrimidine metabolism; UMP biosynthesis via de novo pathway; (S)-dihydroorotate from bicarbonate: step 2/3. Functionally, catalyzes the condensation of carbamoyl phosphate and aspartate to form carbamoyl aspartate and inorganic phosphate, the committed step in the de novo pyrimidine nucleotide biosynthesis pathway. In Hyphomonas neptunium (strain ATCC 15444), this protein is Aspartate carbamoyltransferase catalytic subunit.